The sequence spans 106 residues: Ig kappa-b4 chain C region (106 aa).

Positions 6–99 constitute an Ig-like domain; the sequence is PSVLLFPPSK…VQGSASPIVQ (94 aa). A disulfide bridge links C27 with C87. A compositionally biased stretch (polar residues) spans 48 to 64; sequence QQSGIENSKTPQSPEDN. The interval 48 to 67 is disordered; sequence QQSGIENSKTPQSPEDNTYS.

This chain is Ig kappa-b4 chain C region (K-BAS), found in Oryctolagus cuniculus (Rabbit).